The chain runs to 249 residues: Putative [LysW]-aminoadipate/[LysW]-glutamate kinase (249 aa).

Residues Arg-64 and Asn-166 each contribute to the substrate site.

Belongs to the acetylglutamate kinase family. LysZ subfamily.

It is found in the cytoplasm. It carries out the reaction [amino-group carrier protein]-C-terminal-N-(1,4-dicarboxybutan-1-yl)-L-glutamine + ATP = [amino-group carrier protein]-C-terminal-N-(1-carboxy-5-phosphooxy-5-oxopentan-1-yl)-L-glutamine + ADP. It catalyses the reaction [amino-group carrier protein]-C-terminal-gamma-(L-glutamyl)-L-glutamate + ATP = [amino-group carrier protein]-C-terminal-gamma-(5-phospho-L-glutamyl)-L-glutamate + ADP. The protein operates within amino-acid biosynthesis; L-lysine biosynthesis via AAA pathway; L-lysine from L-alpha-aminoadipate (Thermus route): step 2/5. Its pathway is amino-acid biosynthesis; L-arginine biosynthesis. Functionally, involved in both the arginine and lysine biosynthetic pathways. Phosphorylates the LysW-bound precursors glutamate (for arginine biosynthesis), respectively alpha-aminoadipate (for lysine biosynthesis). The chain is Putative [LysW]-aminoadipate/[LysW]-glutamate kinase from Pyrococcus horikoshii (strain ATCC 700860 / DSM 12428 / JCM 9974 / NBRC 100139 / OT-3).